Reading from the N-terminus, the 100-residue chain is A-type ATP synthase subunit F (100 aa).

Belongs to the V-ATPase F subunit family. As to quaternary structure, has multiple subunits with at least A(3), B(3), C, D, E, F, H, I and proteolipid K(x).

It is found in the cell membrane. Component of the A-type ATP synthase that produces ATP from ADP in the presence of a proton gradient across the membrane. The polypeptide is A-type ATP synthase subunit F (Methanocorpusculum labreanum (strain ATCC 43576 / DSM 4855 / Z)).